Reading from the N-terminus, the 122-residue chain is Phosphoribosyl-ATP pyrophosphatase (122 aa).

The protein belongs to the PRA-PH family.

It is found in the cytoplasm. The enzyme catalyses 1-(5-phospho-beta-D-ribosyl)-ATP + H2O = 1-(5-phospho-beta-D-ribosyl)-5'-AMP + diphosphate + H(+). It participates in amino-acid biosynthesis; L-histidine biosynthesis; L-histidine from 5-phospho-alpha-D-ribose 1-diphosphate: step 2/9. The polypeptide is Phosphoribosyl-ATP pyrophosphatase (Burkholderia thailandensis (strain ATCC 700388 / DSM 13276 / CCUG 48851 / CIP 106301 / E264)).